The primary structure comprises 170 residues: UPF0316 protein CLK_3798 (170 aa).

The next 2 membrane-spanning stretches (helical) occupy residues 1-21 and 36-56; these read MLSYYAFIFFAKIMEVALMTI and IIGFIEVTIWLYVTSSVLSGI.

It belongs to the UPF0316 family.

The protein localises to the cell membrane. This chain is UPF0316 protein CLK_3798, found in Clostridium botulinum (strain Loch Maree / Type A3).